The sequence spans 1083 residues: Centrosomal protein of 131 kDa (1083 aa).

Disordered stretches follow at residues 1–155 (MKGT…AGPR) and 220–258 (GSES…EVTE). Residues 1–250 (MKGTRAIGSV…RNNTGGSTGL (250 aa)) form an interaction with PLK4 region. Phosphoserine occurs at positions 14 and 35. Residue Ser-47 is modified to Phosphoserine; by MAPKAPK2. Residues 68–87 (QAINNLRRSNSTTQVSQPRS) are compositionally biased toward polar residues. Ser-78 bears the Phosphoserine; by MAPKAPK2 and PLK4 mark. Residues Ser-89, Ser-105, Ser-114, Ser-146, and Ser-150 each carry the phosphoserine modification. Residues 138 to 148 (LPSNARSSSAL) are compositionally biased toward polar residues. Residues 232 to 245 (NVSSATHSARNNTG) show a composition bias toward polar residues. The IQ domain occupies 269–289 (NQATVTIQRWYRHQVQRRGAG). Positions 301 to 429 (REEQRQRSGE…PQQPPEDRTQ (129 aa)) are disordered. Composition is skewed to basic and acidic residues over residues 317-333 (HQQK…EKAR) and 360-369 (GPPENPRETR). At Ser-381 the chain carries Phosphoserine. Thr-383 bears the Phosphothreonine mark. 6 positions are modified to phosphoserine: Ser-453, Ser-489, Asp-496, Ser-499, Ser-731, and Ser-798. Residues 1047-1076 (KEEAVSSLRTQHEAAVKRADHLEELLEQHR) show a composition bias toward basic and acidic residues. A disordered region spans residues 1047-1083 (KEEAVSSLRTQHEAAVKRADHLEELLEQHRRPTPSTK).

The protein belongs to the CEP131 family. As to quaternary structure, self-associates. Associates with the centriolar satellite BBSome protein complex. Interacts with BBS4; the interaction limits BBS4 availability for association with the BBSome complex, and hence negatively regulates ciliary localization of the BBSome complex. Interacts with MIB1. Interacts with PCM1; the interaction increases in response to ultraviolet light (UV) radiation. Associates with microtubules; association with microtubules is reduced in response to cellular stress, such as UV stimulation, in a process that requires p38 MAP kinase signaling. Interacts with CEP290, DCTN1, PCNT, PCM1 and CEP152. Interacts with 14-3-3 proteins following UV-induced phosphorylation by MAPKAPK2; this inhibits formation of novel centriolar satellites. Interacts with SDCCAG8. Interacts with CCDC61. Interacts with PLK4. Post-translationally, ubiquitinated. Undergoes monoubiquitination catalyzed by the E3 ubiquitin-protein ligase MIB1 in proliferating cells, preventing cilia formation. Monoubiquitination by MIB1 is inhibited in response to cellular stress, such as ultraviolet light (UV) radiation or heat shock, resulting in cilia formation initiation. In terms of processing, MAPKAPK2-dependent phosphorylation at Ser-47 and Ser-78 occurs in response to cellular stress such as exposure to ultraviolet irradiation and promotes binding to 14-3-3 proteins which leads to cytoplasmic sequestration of CEP131 and blocks formation of new centriolar satellites. Phosphorylation at Ser-78 mediated by PLK4 is essential for proper organization and integrity of centriolar satellites but is dispensable for its localization to centrioles and its function in ciliogenesis.

The protein resides in the cytoplasm. The protein localises to the cytoskeleton. Its subcellular location is the microtubule organizing center. It is found in the centrosome. It localises to the centriolar satellite. The protein resides in the centriole. The protein localises to the cilium basal body. Its subcellular location is the cytoplasmic vesicle. It is found in the secretory vesicle. It localises to the acrosome. Functionally, component of centriolar satellites contributing to the building of a complex and dynamic network required to regulate cilia/flagellum formation. In proliferating cells, MIB1-mediated ubiquitination induces its sequestration within centriolar satellites, precluding untimely cilia formation initiation. In contrast, during normal and ultraviolet or heat shock cellular stress-induced ciliogenesis, its non-ubiquitinated form is rapidly displaced from centriolar satellites and recruited to centrosome/basal bodies in a microtubule- and p38 MAPK-dependent manner. Also acts as a negative regulator of BBSome ciliary trafficking. Plays a role in sperm flagellar formation; may be involved in the regulation of intraflagellar transport (IFT) and/or intramanchette (IMT) trafficking, which are important for axoneme extension and/or cargo delivery to the nascent sperm tail. Required for optimal cell proliferation and cell cycle progression; may play a role in the regulation of genome stability in non-ciliogenic cells. Involved in centriole duplication. Required for CEP152, WDR62 and CEP63 centrosomal localization and promotes the centrosomal localization of CDK2. Essential for maintaining proper centriolar satellite integrity. The protein is Centrosomal protein of 131 kDa (CEP131) of Homo sapiens (Human).